Here is a 191-residue protein sequence, read N- to C-terminus: Surfactant protein C (191 aa).

Positions 1–23 (MDVGSKEVLMESPPDYSAAPRGR) are excised as a propeptide. 2 S-palmitoyl cysteine lipidation sites follow: Cys-28 and Cys-29. The propeptide occupies 59–191 (HMSQKHTEMV…LCGEVPLYYI (133 aa)). Residues 94–191 (FSFGSTGLVV…LCGEVPLYYI (98 aa)) form the BRICHOS domain. A disulfide bridge links Cys-121 with Cys-183.

The protein resides in the secreted. It is found in the extracellular space. The protein localises to the surface film. In terms of biological role, pulmonary surfactant associated proteins promote alveolar stability by lowering the surface tension at the air-liquid interface in the peripheral air spaces. The sequence is that of Surfactant protein C (SFTPC) from Macaca mulatta (Rhesus macaque).